The following is a 154-amino-acid chain: MTIIEGNLRTENAKYGIVVAQFNEFINAKLLSGALDALKRHGVQEEEIDIAWVPGAFEIPIIAQKMATSNKYEAIICLGTVIRGSTSHYDFVCNEVSKGIAHVSLNSNIPVMFGVLTTENIEQAIERAGTKAGNKGFEVAVGAIEMVDLMRKIG.

Residues Phe-22, 56–58 (AFE), and 80–82 (TVI) contribute to the 5-amino-6-(D-ribitylamino)uracil site. 85–86 (ST) contacts (2S)-2-hydroxy-3-oxobutyl phosphate. His-88 acts as the Proton donor in catalysis. Residue Phe-113 coordinates 5-amino-6-(D-ribitylamino)uracil. Arg-127 provides a ligand contact to (2S)-2-hydroxy-3-oxobutyl phosphate.

It belongs to the DMRL synthase family.

It carries out the reaction (2S)-2-hydroxy-3-oxobutyl phosphate + 5-amino-6-(D-ribitylamino)uracil = 6,7-dimethyl-8-(1-D-ribityl)lumazine + phosphate + 2 H2O + H(+). The protein operates within cofactor biosynthesis; riboflavin biosynthesis; riboflavin from 2-hydroxy-3-oxobutyl phosphate and 5-amino-6-(D-ribitylamino)uracil: step 1/2. Functionally, catalyzes the formation of 6,7-dimethyl-8-ribityllumazine by condensation of 5-amino-6-(D-ribitylamino)uracil with 3,4-dihydroxy-2-butanone 4-phosphate. This is the penultimate step in the biosynthesis of riboflavin. The sequence is that of 6,7-dimethyl-8-ribityllumazine synthase from Lactococcus lactis subsp. lactis (strain IL1403) (Streptococcus lactis).